Consider the following 418-residue polypeptide: Inner capsid protein sigma-2 (418 aa).

The protein belongs to the orthoreovirus sigma-1 protein family. In terms of assembly, interacts with protein mu-NS; in viral inclusions.

The protein resides in the virion. Functionally, inner capsid (core) component. The protein is Inner capsid protein sigma-2 (S2) of Mammalia (T1L).